Consider the following 283-residue polypeptide: MADAIDDIVDVVVSTAPDVRDGLTGRRVYEADENPSGERQLEADVYADELLEARLLDVDAVGSYASEERESVIEADEGGRYHVAADPLDGSSNLKSNNTMGTLFGVYEEPLPAAGDALVAAGYVLYGPITTLITARDGTVTESVIDEDGTRTVVTDDLTLPSDPVVYGFGGRVPNWTPAFADYVESVASELKLRYGGAMIGDVNQVLTYGGVFGYPGLEDRPEGKLRLLFEGHPIAAIVEAAGGASSDGDGSLLKKEPEQLHERTPLFVGNDEYIERLEAALP.

Positions 67, 86, 88, and 89 each coordinate Mg(2+). Substrate contacts are provided by residues 89-92 (DGSS), tyrosine 195, and lysine 225. Glutamate 231 contributes to the Mg(2+) binding site.

It belongs to the FBPase class 1 family. As to quaternary structure, homotetramer. Mg(2+) is required as a cofactor.

The protein localises to the cytoplasm. The enzyme catalyses beta-D-fructose 1,6-bisphosphate + H2O = beta-D-fructose 6-phosphate + phosphate. The protein operates within carbohydrate biosynthesis; gluconeogenesis. This chain is Fructose-1,6-bisphosphatase class 1, found in Natronomonas pharaonis (strain ATCC 35678 / DSM 2160 / CIP 103997 / JCM 8858 / NBRC 14720 / NCIMB 2260 / Gabara) (Halobacterium pharaonis).